A 492-amino-acid polypeptide reads, in one-letter code: Steroid 21-hydroxylase (492 aa).

Residues R91 and K120 each coordinate heme b. R231 contributes to the 17alpha-hydroxyprogesterone binding site. Residue R231 coordinates progesterone. Residues H363, R424, and C426 each contribute to the heme b site.

The protein belongs to the cytochrome P450 family. It depends on heme b as a cofactor.

It localises to the endoplasmic reticulum membrane. The protein localises to the microsome membrane. It catalyses the reaction 17alpha-hydroxyprogesterone + reduced [NADPH--hemoprotein reductase] + O2 = 11-deoxycortisol + oxidized [NADPH--hemoprotein reductase] + H2O + H(+). It carries out the reaction progesterone + reduced [NADPH--hemoprotein reductase] + O2 = 21-hydroxyprogesterone + oxidized [NADPH--hemoprotein reductase] + H2O + H(+). Its function is as follows. Specifically catalyzes the 21-hydroxylation of steroids. Required for the adrenal synthesis of mineralocorticoids and glucocorticoids. This chain is Steroid 21-hydroxylase (CYP21), found in Lynx lynx (Eurasian lynx).